A 274-amino-acid chain; its full sequence is Cytochrome b-c1 complex subunit Rieske, mitochondrial (274 aa).

Residues 79–103 (SHTDVKVPDFCDYRRPEVLDSTKSS) are Mitochondrial matrix-facing. A helical membrane pass occupies residues 104 to 140 (RESSEARKSFSYMVTAVTTVGVAYAAKNAVTQFVSSM). Over 141–274 (SASADVLAMA…FTSDDMVVVG (134 aa)) the chain is Mitochondrial intermembrane. A Rieske domain is found at 187–272 (EAAVELSQLR…YEFTSDDMVV (86 aa)). The [2Fe-2S] cluster site is built by Cys-217, His-219, Cys-236, His-239, and Ser-241. A disulfide bridge links Cys-222 with Cys-238.

The protein belongs to the Rieske iron-sulfur protein family. Component of the ubiquinol-cytochrome c oxidoreductase (cytochrome b-c1 complex, complex III, CIII), a multisubunit enzyme composed of 11 subunits. The complex is composed of 3 respiratory subunits cytochrome b, cytochrome c1 and Rieske protein UQCRFS1, 2 core protein subunits UQCRC1/QCR1 and UQCRC2/QCR2, and 6 low-molecular weight protein subunits UQCRH/QCR6, UQCRB/QCR7, UQCRQ/QCR8, UQCR10/QCR9, UQCR11/QCR10 and subunit 9, the cleavage product of Rieske protein UQCRFS1. The complex exists as an obligatory dimer and forms supercomplexes (SCs) in the inner mitochondrial membrane with NADH-ubiquinone oxidoreductase (complex I, CI) and cytochrome c oxidase (complex IV, CIV), resulting in different assemblies (supercomplex SCI(1)III(2)IV(1) and megacomplex MCI(2)III(2)IV(2)). Incorporation of the Rieske protein UQCRFS1 is the penultimate step in complex III assembly. Interacts with TTC19, which is involved in the clearance of UQCRFS1 fragments. In terms of assembly, component of the ubiquinol-cytochrome c oxidoreductase (cytochrome b-c1 complex, complex III, CIII). Subunit 9 corresponds to the mitochondrial targeting sequence (MTS) of Rieske protein UQCRFS1. It is retained after processing and incorporated inside complex III, where it remains bound to the complex and localizes between the 2 core subunits UQCRC1/QCR1 and UQCRC2/QCR2. Requires [2Fe-2S] cluster as cofactor. Proteolytic processing is necessary for the correct insertion of UQCRFS1 in the complex III dimer. Several fragments are generated during UQCRFS1 insertion, most probably due to the endogenous matrix-processing peptidase (MPP) activity of the 2 core protein subunits UQCRC1/QCR1 and UQCRC2/QCR2, which are homologous to the 2 mitochondrial-processing peptidase (MPP) subunits beta-MPP and alpha-MPP respectively. The action of the protease is also necessary for the clearance of the UQCRFS1 fragments.

Its subcellular location is the mitochondrion inner membrane. The enzyme catalyses a quinol + 2 Fe(III)-[cytochrome c](out) = a quinone + 2 Fe(II)-[cytochrome c](out) + 2 H(+)(out). In terms of biological role, component of the ubiquinol-cytochrome c oxidoreductase, a multisubunit transmembrane complex that is part of the mitochondrial electron transport chain which drives oxidative phosphorylation. The respiratory chain contains 3 multisubunit complexes succinate dehydrogenase (complex II, CII), ubiquinol-cytochrome c oxidoreductase (cytochrome b-c1 complex, complex III, CIII) and cytochrome c oxidase (complex IV, CIV), that cooperate to transfer electrons derived from NADH and succinate to molecular oxygen, creating an electrochemical gradient over the inner membrane that drives transmembrane transport and the ATP synthase. The cytochrome b-c1 complex catalyzes electron transfer from ubiquinol to cytochrome c, linking this redox reaction to translocation of protons across the mitochondrial inner membrane, with protons being carried across the membrane as hydrogens on the quinol. In the process called Q cycle, 2 protons are consumed from the matrix, 4 protons are released into the intermembrane space and 2 electrons are passed to cytochrome c. The Rieske protein is a catalytic core subunit containing a [2Fe-2S] iron-sulfur cluster. It cycles between 2 conformational states during catalysis to transfer electrons from the quinol bound in the Q(0) site in cytochrome b to cytochrome c1. Incorporation of UQCRFS1 is the penultimate step in complex III assembly. Functionally, component of the ubiquinol-cytochrome c oxidoreductase (cytochrome b-c1 complex, complex III, CIII). UQCRFS1 undergoes proteolytic processing once it is incorporated in the complex III dimer. One of the fragments, called subunit 9, corresponds to its mitochondrial targeting sequence (MTS). The proteolytic processing is necessary for the correct insertion of UQCRFS1 in the complex III dimer, but the persistence of UQCRFS1-derived fragments may prevent newly imported UQCRFS1 to be processed and assembled into complex III and is detrimental for the complex III structure and function. The sequence is that of Cytochrome b-c1 complex subunit Rieske, mitochondrial (UQCRFS1) from Colobus polykomos (Western black-and-white colobus monkey).